Consider the following 613-residue polypeptide: Dihydroxy-acid dehydratase (613 aa).

D81 lines the Mg(2+) pocket. C122 contacts [2Fe-2S] cluster. Positions 123 and 124 each coordinate Mg(2+). K124 carries the N6-carboxylysine modification. C193 is a binding site for [2Fe-2S] cluster. Position 489 (E489) interacts with Mg(2+). S515 (proton acceptor) is an active-site residue.

Belongs to the IlvD/Edd family. As to quaternary structure, homodimer. [2Fe-2S] cluster serves as cofactor. It depends on Mg(2+) as a cofactor.

The enzyme catalyses (2R)-2,3-dihydroxy-3-methylbutanoate = 3-methyl-2-oxobutanoate + H2O. It carries out the reaction (2R,3R)-2,3-dihydroxy-3-methylpentanoate = (S)-3-methyl-2-oxopentanoate + H2O. Its pathway is amino-acid biosynthesis; L-isoleucine biosynthesis; L-isoleucine from 2-oxobutanoate: step 3/4. It functions in the pathway amino-acid biosynthesis; L-valine biosynthesis; L-valine from pyruvate: step 3/4. Its function is as follows. Functions in the biosynthesis of branched-chain amino acids. Catalyzes the dehydration of (2R,3R)-2,3-dihydroxy-3-methylpentanoate (2,3-dihydroxy-3-methylvalerate) into 2-oxo-3-methylpentanoate (2-oxo-3-methylvalerate) and of (2R)-2,3-dihydroxy-3-methylbutanoate (2,3-dihydroxyisovalerate) into 2-oxo-3-methylbutanoate (2-oxoisovalerate), the penultimate precursor to L-isoleucine and L-valine, respectively. This Pseudomonas fluorescens (strain ATCC BAA-477 / NRRL B-23932 / Pf-5) protein is Dihydroxy-acid dehydratase.